A 493-amino-acid polypeptide reads, in one-letter code: Rho guanine nucleotide exchange factor 9 (493 aa).

An SH3 domain is found at Asp-15 to Asn-74. The interval Arg-107 to Glu-117 is interaction with GPHN. The DH domain occupies Met-110 to Arg-294. Positions Glu-325 to Lys-432 constitute a PH domain. A disordered region spans residues Ala-453 to Ser-473.

Interacts with GPHN. As to expression, detected in brain, throughout the gray matter. Detected at low levels in heart and skeletal muscle.

The protein localises to the cytoplasm. It is found in the postsynaptic density. Acts as a guanine nucleotide exchange factor (GEF) for CDC42. Promotes formation of GPHN clusters. In Rattus norvegicus (Rat), this protein is Rho guanine nucleotide exchange factor 9 (Arhgef9).